Consider the following 254-residue polypeptide: Type II restriction enzyme HpaI (254 aa).

The catalysed reaction is Endonucleolytic cleavage of DNA to give specific double-stranded fragments with terminal 5'-phosphates.. A P subtype restriction enzyme that recognizes the double-stranded sequence 5'-GTTAAC-3' and cleaves after T-3. This chain is Type II restriction enzyme HpaI (hpaIR), found in Haemophilus parainfluenzae.